The following is a 363-amino-acid chain: Flagellar P-ring protein (363 aa).

Residues 1–20 (MKIKLILACALMVFSAASSA) form the signal peptide.

It belongs to the FlgI family. As to quaternary structure, the basal body constitutes a major portion of the flagellar organelle and consists of four rings (L,P,S, and M) mounted on a central rod.

Its subcellular location is the periplasm. It localises to the bacterial flagellum basal body. Assembles around the rod to form the L-ring and probably protects the motor/basal body from shearing forces during rotation. This is Flagellar P-ring protein from Shewanella loihica (strain ATCC BAA-1088 / PV-4).